The sequence spans 383 residues: Odorant receptor 94b (383 aa).

Residues 1–41 (MESTNRLSAIQTLLVIQRWIGLLKWENEGEDGVLTWLKRIY) are Cytoplasmic-facing. Residues 42-62 (PFVLHLPLTFTYIALMWYEAI) form a helical membrane-spanning segment. The Extracellular portion of the chain corresponds to 63–70 (TSSDFEEA). Residues 71-91 (GQVLYMSITELALVTKLLNIW) traverse the membrane as a helical segment. Over 92–130 (YRRHEAASLIHELQHDPAFNLRNSEEIKFWQQNQRNFKR) the chain is Cytoplasmic. The helical transmembrane segment at 131–151 (IFYWYIWGSLFVAVMGYISVF) threads the bilayer. Residues 152 to 174 (FQEDYELPFGYYVPFEWRTRERY) lie on the Extracellular side of the membrane. The helical transmembrane segment at 175–195 (FYAWGYNVVAMTLCCLSNILL) threads the bilayer. The Cytoplasmic segment spans residues 196 to 250 (DTLGCYFMFHIASLFRLLGMRLEALKNAAEEKARPELRRIFQLHTKVRRLTRECE). The helical transmembrane segment at 251-271 (VLVSPYVLSQVVFSAFIICFS) threads the bilayer. The Extracellular portion of the chain corresponds to 272 to 284 (AYRLVHMGFKQRP). The chain crosses the membrane as a helical span at residues 285–305 (GLFVTTVQFVAVMIVQIFLPC). At 306–358 (YYGNELTFHANALTNSVFGTNWLEYSVGTRKLLNCYMEFLKRPVKVRAGVFFE) the chain is on the cytoplasmic side. A helical transmembrane segment spans residues 359 to 379 (IGLPIFVKTINNAYSFFALLL). At 380 to 383 (KISK) the chain is on the extracellular side.

It belongs to the insect chemoreceptor superfamily. Heteromeric odorant receptor channel (TC 1.A.69) family. Or2a subfamily. In terms of assembly, interacts with Orco. Complexes exist early in the endomembrane system in olfactory sensory neurons (OSNs), coupling these complexes to the conserved ciliary trafficking pathway.

It localises to the cell membrane. In terms of biological role, odorant receptor which mediates acceptance or avoidance behavior, depending on its substrates. The odorant receptor repertoire encodes a large collection of odor stimuli that vary widely in identity, intensity, and duration. May form a complex with Orco to form odorant-sensing units, providing sensitive and prolonged odorant signaling and calcium permeability. The sequence is that of Odorant receptor 94b (Or94b) from Drosophila melanogaster (Fruit fly).